A 293-amino-acid chain; its full sequence is Probable endonuclease 4 (293 aa).

Residues His75, His115, Glu153, Asp187, His190, His224, Asp237, His239, and Glu269 each contribute to the Zn(2+) site.

It belongs to the AP endonuclease 2 family. Requires Zn(2+) as cofactor.

The catalysed reaction is Endonucleolytic cleavage to 5'-phosphooligonucleotide end-products.. In terms of biological role, endonuclease IV plays a role in DNA repair. It cleaves phosphodiester bonds at apurinic or apyrimidinic (AP) sites, generating a 3'-hydroxyl group and a 5'-terminal sugar phosphate. The polypeptide is Probable endonuclease 4 (Chlamydia pneumoniae (Chlamydophila pneumoniae)).